Consider the following 245-residue polypeptide: 1-acyl-sn-glycerol-3-phosphate acyltransferase (245 aa).

Positions 73–78 (HQNNYD) match the HXXXXD motif motif.

This sequence belongs to the 1-acyl-sn-glycerol-3-phosphate acyltransferase family.

It is found in the cell inner membrane. It carries out the reaction a 1-acyl-sn-glycero-3-phosphate + an acyl-CoA = a 1,2-diacyl-sn-glycero-3-phosphate + CoA. Its pathway is phospholipid metabolism; CDP-diacylglycerol biosynthesis; CDP-diacylglycerol from sn-glycerol 3-phosphate: step 2/3. Converts lysophosphatidic acid (LPA) into phosphatidic acid by incorporating an acyl moiety at the 2 position. This enzyme can utilize either acyl-CoA or acyl-acyl-carrier-protein as the fatty acyl donor. In Salmonella typhi, this protein is 1-acyl-sn-glycerol-3-phosphate acyltransferase (plsC).